The chain runs to 857 residues: Glucans biosynthesis glucosyltransferase H (857 aa).

The next 6 membrane-spanning stretches (helical) occupy residues 141–158 (YILL…GWYM), 197–219 (LILF…MGFL), 514–536 (AVFL…LVLS), 570–592 (VALF…ILIW), 605–627 (VTLS…MIFH), and 681–703 (SFLW…SVIS).

Belongs to the glycosyltransferase 2 family. OpgH subfamily.

It is found in the cell inner membrane. It functions in the pathway glycan metabolism; osmoregulated periplasmic glucan (OPG) biosynthesis. In terms of biological role, involved in the biosynthesis of osmoregulated periplasmic glucans (OPGs). This Pseudomonas putida (strain ATCC 47054 / DSM 6125 / CFBP 8728 / NCIMB 11950 / KT2440) protein is Glucans biosynthesis glucosyltransferase H.